The primary structure comprises 160 residues: Serine-protein kinase RsbW (160 aa).

This sequence belongs to the anti-sigma-factor family.

The enzyme catalyses L-seryl-[protein] + ATP = O-phospho-L-seryl-[protein] + ADP + H(+). It catalyses the reaction L-threonyl-[protein] + ATP = O-phospho-L-threonyl-[protein] + ADP + H(+). Negative regulator of sigma-B activity. Phosphorylates and inactivates its specific antagonist protein, RsbV. Upon phosphorylation of RsbV, RsbW is released and binds to sigma-B, thereby blocking its ability to form an RNA polymerase holoenzyme (E-sigma-B). The protein is Serine-protein kinase RsbW of Bacillus cereus (strain Q1).